A 654-amino-acid polypeptide reads, in one-letter code: Pentatricopeptide repeat-containing protein At4g19191, mitochondrial (654 aa).

A mitochondrion-targeting transit peptide spans 1 to 65; that stretch reads MSLIHRRLYR…PFVAKACARL (65 aa). PPR repeat units lie at residues 86-116, 117-151, 152-186, 187-217, 220-254, 255-289, 290-320, 321-355, 356-390, 392-422, 423-457, 458-488, and 494-524; these read DVFV…MPER, DATT…EITP, DSVT…GVDV, QVTV…IDRG, TVVS…EFKP, DLST…GTDQ, DIEA…MTSR, TCVS…GEKP, DLVT…GCKR, NVMI…TPEK, TVVT…DYKP, NHIT…MKQV, and GLDH…MSAK. A type E motif region spans residues 529–604; the sequence is IWGALLNACK…YPGESVIQVN (76 aa). The interval 605–635 is type E(+) motif; sequence GKNHSFTVGEHGHVENEVIYFTLNGLSLFAK.

The protein belongs to the PPR family. PCMP-E subfamily.

It localises to the mitochondrion. The sequence is that of Pentatricopeptide repeat-containing protein At4g19191, mitochondrial (PCMP-E1) from Arabidopsis thaliana (Mouse-ear cress).